The primary structure comprises 554 residues: Membrane protein insertase YidC (554 aa).

A run of 5 helical transmembrane segments spans residues 7–24 (VLWVIFFMSAVMLYDNWQ), 362–382 (VVGNWGWAIVLLTILIKAVFF), 436–456 (LPVVIQIPVFISLYWVLLASV), 475–495 (PFFILPVLMAVSMYVQTSLNP), and 510–530 (PIAFSVMFFFFPAGLVLYYVV).

The protein belongs to the OXA1/ALB3/YidC family. Type 1 subfamily. As to quaternary structure, interacts with the Sec translocase complex via SecD. Specifically interacts with transmembrane segments of nascent integral membrane proteins during membrane integration.

Its subcellular location is the cell inner membrane. In terms of biological role, required for the insertion and/or proper folding and/or complex formation of integral membrane proteins into the membrane. Involved in integration of membrane proteins that insert both dependently and independently of the Sec translocase complex, as well as at least some lipoproteins. Aids folding of multispanning membrane proteins. This is Membrane protein insertase YidC from Burkholderia vietnamiensis (strain G4 / LMG 22486) (Burkholderia cepacia (strain R1808)).